A 530-amino-acid polypeptide reads, in one-letter code: Berberine bridge enzyme-like 22 (530 aa).

A signal peptide spans 1–22; that stretch reads MRELFMYLFLLFLVLCVKSVYS. Residues Cys-32 and Cys-99 are joined by a disulfide bond. N-linked (GlcNAc...) asparagine glycosylation is found at Asn-39, Asn-47, Asn-68, Asn-75, Asn-141, and Asn-486. One can recognise an FAD-binding PCMH-type domain in the interval 77–251; the sequence is TSLKPILIVK…LSWKVKLARV (175 aa). The 6-(S-cysteinyl)-8alpha-(pros-histidyl)-FAD (His-Cys) cross-link spans 114–176; sequence HDYEGLSYLS…KIHAFAAGIC (63 aa).

The protein belongs to the oxygen-dependent FAD-linked oxidoreductase family. FAD serves as cofactor. In terms of processing, the FAD cofactor is bound via a bicovalent 6-S-cysteinyl, 8alpha-N1-histidyl FAD linkage. As to expression, accumulates in cell walls of etiolated hypocotyls.

It is found in the secreted. It localises to the cell wall. This chain is Berberine bridge enzyme-like 22, found in Arabidopsis thaliana (Mouse-ear cress).